Here is a 1987-residue protein sequence, read N- to C-terminus: Transcription factor 20 (1987 aa).

The span at 1-22 shows a compositional bias: polar residues; that stretch reads MQSFREQSSYHGNQQSYPQEVH. Disordered stretches follow at residues 1-79, 96-432, 446-481, 502-816, and 844-891; these read MQSF…QGYQ, DTVA…GNVP, LSPT…DPGL, LLSD…GTAR, and PHWG…SLSE. The segment covering 51 to 74 has biased composition (low complexity); sequence TGSSSSGRRGTAAAAAAMASETSG. Arg-59 carries the post-translational modification Omega-N-methylarginine. Polar residues predominate over residues 121 to 142; that stretch reads QGSSFGNQYASEGHVSQFQAQH. Over residues 163-205 the composition is skewed to low complexity; sequence SAQYQQQASSQQQQQQQQQQQQQQQQQQQQVQQLRQQLYQSHQ. Residues 206 to 235 are compositionally biased toward polar residues; it reads PLPQTTGQPASGSSHLQPMQRPSTLPSSAG. The segment covering 248-277 has biased composition (low complexity); it reads QSSASSSSSSSFPSPQRFSQSGQSYDGSYS. A compositionally biased stretch (polar residues) spans 289–311; that stretch reads VGSNAQAYGTQSNYSYQPQSMKN. Lys-316 is covalently cross-linked (Glycyl lysine isopeptide (Lys-Gly) (interchain with G-Cter in SUMO2)). Positions 322-354 are enriched in low complexity; sequence QQGQQQQQQQPQPQQQQPQQQQQQQQQQQHPPQ. The span at 357-377 shows a compositional bias: polar residues; that stretch reads MQYTNAATKMPLQSQVGQYNQ. Residues 396 to 416 show a composition bias toward low complexity; the sequence is SNPSPAASVVQSPSCSSTPSP. Positions 417–432 are enriched in polar residues; the sequence is LMQSGENLQCGQGNVP. The segment covering 446–456 has biased composition (low complexity); the sequence is LSPTPSMMPSP. A phosphoserine mark is found at Ser-447 and Ser-458. Composition is skewed to polar residues over residues 526-537, 566-576, and 585-605; these read SCTNSEGSSQPE, LSGQSTSSDTT, and AGSS…TSPA. Ser-567, Ser-588, Ser-603, and Ser-612 each carry phosphoserine. Over residues 618-627 the composition is skewed to polar residues; the sequence is TSLSSEGNTK. Lys-631 is subject to N6-acetyllysine. A compositionally biased stretch (basic and acidic residues) spans 645-657; that stretch reads RVEKSGGQDKGSQ. The segment covering 666 to 682 has biased composition (polar residues); that stretch reads RPPSNSGVKEISHTSLP. Ser-669 is subject to Phosphoserine. Residues 693-715 are compositionally biased toward low complexity; it reads GNKNGDNNSSNHNGEGNGPSSHS. A compositionally biased stretch (polar residues) spans 722-731; that stretch reads TGRTEPSKSP. Residues Lys-739, Lys-762, Lys-777, Lys-852, Lys-861, and Lys-873 each participate in a glycyl lysine isopeptide (Lys-Gly) (interchain with G-Cter in SUMO2) cross-link. Positions 761 to 777 are enriched in basic and acidic residues; it reads EKGDFGSHGERKGRNEK. The residue at position 900 (Ser-900) is a Phosphoserine. Residues Lys-949 and Lys-951 each participate in a glycyl lysine isopeptide (Lys-Gly) (interchain with G-Cter in SUMO2) cross-link. Positions 949 to 1065 are disordered; it reads KLKSQSGQIK…GDPHHMNPHM (117 aa). Lys-958 participates in a covalent cross-link: Glycyl lysine isopeptide (Lys-Gly) (interchain with G-Cter in SUMO1); alternate. Lys-958 is covalently cross-linked (Glycyl lysine isopeptide (Lys-Gly) (interchain with G-Cter in SUMO2); alternate). Basic and acidic residues predominate over residues 974–989; the sequence is KSGDHCHPTSIKHETY. A Glycyl lysine isopeptide (Lys-Gly) (interchain with G-Cter in SUMO2) cross-link involves residue Lys-985. 2 positions are modified to phosphoserine: Ser-994 and Ser-1033. Lys-1043 is covalently cross-linked (Glycyl lysine isopeptide (Lys-Gly) (interchain with G-Cter in SUMO2)). An Omega-N-methylarginine modification is found at Arg-1052. Residue Ser-1081 is modified to Phosphoserine. Residues Lys-1114, Lys-1126, Lys-1165, Lys-1201, Lys-1206, Lys-1211, Lys-1238, Lys-1259, Lys-1295, and Lys-1302 each participate in a glycyl lysine isopeptide (Lys-Gly) (interchain with G-Cter in SUMO2) cross-link. The tract at residues 1136–1372 is disordered; it reads VIAAAQHRQE…SPAKTKILPP (237 aa). Residues 1158–1170 are compositionally biased toward basic and acidic residues; the sequence is DRVRSPLKNDKDG. The tract at residues 1198 to 1219 is leucine-zipper; it reads LPAKSMELKHSSQKLQESCWDL. The Nuclear localization signal motif lies at 1282–1295; it reads RRRVRSFISPIPSK. Composition is skewed to basic and acidic residues over residues 1305–1321 and 1332–1346; these read NADD…EGAD and HSQD…DSSK. Phosphoserine is present on Ser-1333. Lys-1337 participates in a covalent cross-link: Glycyl lysine isopeptide (Lys-Gly) (interchain with G-Cter in SUMO2). Phosphoserine is present on Ser-1363. A Glycyl lysine isopeptide (Lys-Gly) (interchain with G-Cter in SUMO2) cross-link involves residue Lys-1366. Position 1389 is a phosphoserine (Ser-1389). Positions 1415–1434 are disordered; that stretch reads SLKSGPPEGGTVATQEAEME. Glycyl lysine isopeptide (Lys-Gly) (interchain with G-Cter in SUMO2) cross-links involve residues Lys-1417, Lys-1437, Lys-1456, and Lys-1474. The segment at 1446–1636 is disordered; sequence SVTNQESNVE…KQAVPIVEPQ (191 aa). The span at 1463–1479 shows a compositional bias: basic and acidic residues; that stretch reads EEWRGSGDDKVKTEAHV. Polar residues predominate over residues 1481–1501; that stretch reads TASTGKEPSGTMTSTASQKPG. Lys-1538 participates in a covalent cross-link: Glycyl lysine isopeptide (Lys-Gly) (interchain with G-Cter in SUMO2). Position 1550 is a phosphoserine (Ser-1550). Lys-1552 participates in a covalent cross-link: Glycyl lysine isopeptide (Lys-Gly) (interchain with G-Cter in SUMO2). The a.T hook DNA-binding region spans 1565 to 1579; sequence GKKKGRPIGSVNKQK. Residues 1584–1594 show a composition bias toward pro residues; that stretch reads QPPPPPQPPQM. A Nuclear localization signal motif is present at residues 1604–1628; that stretch reads KPKKQRQRRERRKPGAQPRKRKTKQ. Over residues 1606–1627 the composition is skewed to basic residues; the sequence is KKQRQRRERRKPGAQPRKRKTK. Lys-1641 is covalently cross-linked (Glycyl lysine isopeptide (Lys-Gly) (interchain with G-Cter in SUMO2)). 2 disordered regions span residues 1685–1710 and 1760–1865; these read QTKL…SKVL and TLPK…GPEL. Ser-1697 carries the phosphoserine modification. A phosphothreonine mark is found at Thr-1699, Thr-1790, and Thr-1792. The Nuclear localization signal signature appears at 1812 to 1819; the sequence is RFKRRHRS. Positions 1850 to 1859 are enriched in polar residues; sequence DTKPSVPTTS. The C2HC pre-PHD-type; degenerate zinc-finger motif lies at 1856-1892; it reads PTTSEGGPELELQIPELPLDSNEFWVHEGCILWANGI. The PHD-type zinc finger occupies 1912-1960; the sequence is MKCSHCQEAGATLGCYNKGCSFRYHYPCAIDADCLLHEENFSVRCPKHK. Positions 1966–1987 are disordered; it reads PLPPLQNKTAKGSLSTEQSERG. Over residues 1971 to 1987 the composition is skewed to polar residues; it reads QNKTAKGSLSTEQSERG.

As to quaternary structure, homodimer. Interacts with RNF4 and JUN. Binds to the regulatory region of MMP3. As to expression, expressed in brain, lung, liver, kidney and testes.

It localises to the nucleus. In terms of biological role, transcriptional activator that binds to the regulatory region of MMP3 and thereby controls stromelysin expression. It stimulates the activity of various transcriptional activators such as JUN, SP1, PAX6 and ETS1, suggesting a function as a coactivator. The sequence is that of Transcription factor 20 (Tcf20) from Mus musculus (Mouse).